The chain runs to 250 residues: Pyrroloquinoline-quinone synthase (250 aa).

The protein belongs to the PqqC family.

The catalysed reaction is 6-(2-amino-2-carboxyethyl)-7,8-dioxo-1,2,3,4,7,8-hexahydroquinoline-2,4-dicarboxylate + 3 O2 = pyrroloquinoline quinone + 2 H2O2 + 2 H2O + H(+). It functions in the pathway cofactor biosynthesis; pyrroloquinoline quinone biosynthesis. Ring cyclization and eight-electron oxidation of 3a-(2-amino-2-carboxyethyl)-4,5-dioxo-4,5,6,7,8,9-hexahydroquinoline-7,9-dicarboxylic-acid to PQQ. The chain is Pyrroloquinoline-quinone synthase from Xanthomonas oryzae pv. oryzae (strain PXO99A).